The following is a 332-amino-acid chain: ADP-L-glycero-D-manno-heptose-6-epimerase (332 aa).

NADP(+) contacts are provided by residues 10–11 (FI), 31–32 (DD), K38, 74–78 (QGACS), and N91. Residue Y138 is the Proton acceptor of the active site. K142 is a binding site for NADP(+). N167 lines the substrate pocket. 2 residues coordinate NADP(+): V168 and K176. K176 acts as the Proton acceptor in catalysis. Residues R178, H185, 199-202 (FSGW), R212, and Y291 contribute to the substrate site.

It belongs to the NAD(P)-dependent epimerase/dehydratase family. HldD subfamily. As to quaternary structure, homopentamer. NADP(+) is required as a cofactor.

It carries out the reaction ADP-D-glycero-beta-D-manno-heptose = ADP-L-glycero-beta-D-manno-heptose. It functions in the pathway nucleotide-sugar biosynthesis; ADP-L-glycero-beta-D-manno-heptose biosynthesis; ADP-L-glycero-beta-D-manno-heptose from D-glycero-beta-D-manno-heptose 7-phosphate: step 4/4. Functionally, catalyzes the interconversion between ADP-D-glycero-beta-D-manno-heptose and ADP-L-glycero-beta-D-manno-heptose via an epimerization at carbon 6 of the heptose. The chain is ADP-L-glycero-D-manno-heptose-6-epimerase from Bordetella avium (strain 197N).